A 576-amino-acid polypeptide reads, in one-letter code: Beta-bisabolene synthase (576 aa).

Residues arginine 286, aspartate 323, aspartate 327, arginine 466, and asparagine 469 each contribute to the (2E,6E)-farnesyl diphosphate site. 2 residues coordinate Mg(2+): aspartate 323 and aspartate 327. Positions 323 to 327 match the DDXXD motif motif; sequence DDVYD. Mg(2+) contacts are provided by asparagine 469, threonine 473, and glutamate 477.

It belongs to the terpene synthase family. Tpsb subfamily. It depends on Mg(2+) as a cofactor. Mn(2+) is required as a cofactor.

Its function is as follows. Produces almost exclusively beta-bisabolene and only traces of alpha-bisabolol from (2E,6E)-farnesyl diphosphate in fragrance biosynthesis. The polypeptide is Beta-bisabolene synthase (Santalum austrocaledonicum (Sandalwood)).